The chain runs to 192 residues: MLKKTLAALAIGTALLSAGQVMAADYKIDKEGQHAFIDWKISHLGYSYIHGTFKDWDGTFSWDAAKPETSKIAVDVKTASLWSNHAERDKHIASKDFLDVAKFADAKFVSTAVKSTGEKTADVTGDLTFHGVTKPVTFKATFNGEGKDPWGGERAGFNAKTTVNLNDFGIKGPGPSSQTVDLDISLEGVKQK.

Positions 1 to 23 (MLKKTLAALAIGTALLSAGQVMA) are cleaved as a signal peptide.

The protein belongs to the UPF0312 family. Type 1 subfamily.

It is found in the periplasm. The protein is UPF0312 protein PFLU_5725 of Pseudomonas fluorescens (strain SBW25).